Reading from the N-terminus, the 336-residue chain is uncharacterized protein (336 aa).

The interval 196–222 (YKEGDDSNWDDFGSESEDDSKEAHSEE) is disordered. A compositionally biased stretch (acidic residues) spans 201 to 215 (DSNWDDFGSESEDDS). S211 carries the post-translational modification Phosphoserine.

This is an uncharacterized protein from Schizosaccharomyces pombe (strain 972 / ATCC 24843) (Fission yeast).